The following is a 948-amino-acid chain: Receptor-like protein 45 (948 aa).

The first 26 residues, 1–26 (MSSSKLMDFGLTWIIMMMILLQGCRS), serve as a signal peptide directing secretion. Over 27–897 (CIESERQGLL…EDDDESGLLD (871 aa)) the chain is Extracellular. N99 and N113 each carry an N-linked (GlcNAc...) asparagine glycan. 2 LRR repeats span residues 106-129 (FEEL…RKGG) and 135-162 (LRNL…AVSL). The LRR 3; degenerate repeat unit spans residues 163–183 (KTLILHDNLFKGGFPVQELIN). N183 carries N-linked (GlcNAc...) asparagine glycosylation. LRR repeat units lie at residues 184 to 208 (LTSL…ELTN), 210 to 233 (RNLR…GICR), 234 to 257 (LEQL…CFSR), 258 to 284 (FSKL…DFKS), 286 to 306 (EYLS…LITE), 307 to 332 (LTEL…VSGG), 334 to 357 (QSQL…LWYQ), 358 to 381 (QELR…LLEN), 382 to 404 (NTEL…PRTM), 405 to 429 (RRLQ…GLIL), 430 to 453 (ASLR…MARM), 454 to 477 (ENIE…LFTG), 479 to 502 (YSLS…SSDE), 503 to 526 (TSLI…LLNL), 527 to 549 (RMLS…WLGN), 550 to 573 (FFLE…LFNI), 575 to 595 (YLWL…LRSS), 596 to 618 (SDYG…DTLW), 619 to 640 (YGLR…LFRS), 642 to 665 (PSIS…LCGL), 666 to 689 (SNVR…VTNL), 758 to 782 (LNQM…LGDL), 783 to 805 (KRVR…SFSN), 807 to 831 (RSIE…TLLQ), and 833 to 855 (LVVF…QFNT). N328 carries an N-linked (GlcNAc...) asparagine glycan. N-linked (GlcNAc...) asparagine glycans are attached at residues N381 and N392. N-linked (GlcNAc...) asparagine glycans are attached at residues N436 and N465. N608 is a glycosylation site (N-linked (GlcNAc...) asparagine). N-linked (GlcNAc...) asparagine glycans are attached at residues N653, N679, and N688. N789 is a glycosylation site (N-linked (GlcNAc...) asparagine). N837 and N842 each carry an N-linked (GlcNAc...) asparagine glycan. The chain crosses the membrane as a helical span at residues 898-918 (IVVLWWSLGTTYVTVMMGFLV). The Cytoplasmic portion of the chain corresponds to 919–948 (FLCFDSPWRRAWFCLVDTFIDRVKDVLGVI).

This sequence belongs to the RLP family.

The protein localises to the cell membrane. In Arabidopsis thaliana (Mouse-ear cress), this protein is Receptor-like protein 45.